Here is a 388-residue protein sequence, read N- to C-terminus: Cuticle-degrading protease (388 aa).

A signal peptide spans 1 to 18; the sequence is MHLSALLTLLPAVLAAPA. Positions 19–107 are excised as a propeptide; it reads TIGRRAEPAP…IEKDAVMRIS (89 aa). In terms of domain architecture, Inhibitor I9 spans 41 to 106; the sequence is KYIVKFKDDI…FIEKDAVMRI (66 aa). The Peptidase S8 domain occupies 116 to 388; the sequence is PWGLGRISHR…TVNYLAYNGA (273 aa). 2 disulfides stabilise this stretch: Cys143/Cys233 and Cys288/Cys360. Catalysis depends on charge relay system residues Asp148 and His179. N-linked (GlcNAc...) asparagine glycosylation occurs at Asn296. Catalysis depends on Ser334, which acts as the Charge relay system.

Belongs to the peptidase S8 family.

It is found in the secreted. In terms of biological role, capable of breaching the insect cuticle. The chain is Cuticle-degrading protease (PR1) from Metarhizium anisopliae (Entomophthora anisopliae).